We begin with the raw amino-acid sequence, 411 residues long: Lysosome-associated membrane glycoprotein 2 (411 aa).

An N-terminal signal peptide occupies residues 1-26 (MRLLSPVTGSKLVLLFLFLGAVRSDA). Positions 27 to 188 (LKLNLTDSKG…SKHEQVCKED (162 aa)) are first lumenal domain. Residues 27–376 (LKLNLTDSKG…QDCSADEDNF (350 aa)) are Lumenal-facing. The cysteines at positions 38 and 75 are disulfide-linked. Asparagine 46, asparagine 57, asparagine 71, asparagine 97, asparagine 109, asparagine 117, asparagine 175, asparagine 223, asparagine 230, asparagine 243, asparagine 261, asparagine 276, asparagine 308, asparagine 318, and asparagine 357 each carry an N-linked (GlcNAc...) asparagine glycan. A disulfide bond links cysteine 149 and cysteine 185. Residues 189 to 229 (KTATTVAPIIHTTVPSPTTTLTPTSIPVPTPTVGNYTISNG) are hinge. Residues 230–376 (NATCLLATMG…QDCSADEDNF (147 aa)) form a second lumenal domain region. Cysteine 233 and cysteine 266 form a disulfide bridge. The cysteines at positions 332 and 369 are disulfide-linked. The chain crosses the membrane as a helical span at residues 377–400 (LVPIAVGAALGGVLILVLLAYFIG). Residues 401–411 (LKRHHTGYEQF) are Cytoplasmic-facing. The tract at residues 402–405 (KRHH) is important for binding and subsequent lysosomal degradation of target proteins.

Belongs to the LAMP family. As to quaternary structure, monomer. Forms large homooligomers. Interacts (via its cytoplasmic region) with HSPA8; HSPA8 mediates recruitment of proteins with a KFERQ motif to the surface of the lysosome for chaperone-mediated autophagy. Interacts with HSP90 in the lysosome lumen; this enhances LAMP2 stability. Interacts with MLLT11. Interacts with ABCB9. Interacts with FURIN. Interacts with CT55; this interaction may be important for LAMP2 protein stability. Interacts with TMEM175; inhibiting the proton channel activity of TMEM175. Forms a ternary complex with RAB7A and RUFY4 (via RUN domain); the interaction with RAB7A is mediated by RUFY4 (via RUN and coiled coil domains). In terms of processing, extensively N-glycosylated. Contains a minor proportion of O-linked glycans. Contains sialylated glycans. As to expression, detected in liver, kidney, spleen and macrophages (at protein level).

It is found in the lysosome membrane. The protein localises to the endosome membrane. It localises to the cell membrane. The protein resides in the cytoplasmic vesicle. Its subcellular location is the autophagosome membrane. Lysosomal membrane glycoprotein which plays an important role in lysosome biogenesis, lysosomal pH regulation and autophagy. Acts as an important regulator of lysosomal lumen pH regulation by acting as a direct inhibitor of the proton channel TMEM175, facilitating lysosomal acidification for optimal hydrolase activity. Plays an important role in chaperone-mediated autophagy, a process that mediates lysosomal degradation of proteins in response to various stresses and as part of the normal turnover of proteins with a long biological half-live. Functions by binding target proteins, such as GAPDH, NLRP3 and MLLT11, and targeting them for lysosomal degradation. In the chaperone-mediated autophagy, acts downstream of chaperones, such as HSPA8/HSC70, which recognize and bind substrate proteins and mediate their recruitment to lysosomes, where target proteins bind LAMP2. Plays a role in lysosomal protein degradation in response to starvation. Required for the fusion of autophagosomes with lysosomes during autophagy. Cells that lack LAMP2 express normal levels of VAMP8, but fail to accumulate STX17 on autophagosomes, which is the most likely explanation for the lack of fusion between autophagosomes and lysosomes. Required for normal degradation of the contents of autophagosomes. Required for efficient MHC class II-mediated presentation of exogenous antigens via its function in lysosomal protein degradation; antigenic peptides generated by proteases in the endosomal/lysosomal compartment are captured by nascent MHC II subunits. Is not required for efficient MHC class II-mediated presentation of endogenous antigens. In Rattus norvegicus (Rat), this protein is Lysosome-associated membrane glycoprotein 2 (Lamp2).